The following is a 186-amino-acid chain: MTTYRRMTLCDTLQFNFVNLDQLTETYNTSFYGEYVTHWPEYQRMCVHPTTNIPMAYTLGKAEGQGEDYHGHVSAVSVAPTFRRVALGETLMAELAQMSELVHNAYFVDLFVRKSNQVAQDMYHRLGYIVYRTVLNYYHGDGPKGPFKSDEDALDMRLALRRDKERRKSSVIPLDRPIKPEELEWV.

The 160-residue stretch at 2–161 folds into the N-acetyltransferase domain; that stretch reads TTYRRMTLCD…DALDMRLALR (160 aa).

It belongs to the acetyltransferase family. ARD1 subfamily.

Functionally, seems to be involved in N-acetylation. The chain is N-terminal acetyltransferase complex ARD1 subunit homolog (ARD1) from Leishmania donovani.